The primary structure comprises 727 residues: Endothelin-converting enzyme homolog (727 aa).

At 1 to 44 (MSFNFSRYSGAYTTTFSFLLLALLIVSAVLLSRPYAPALLHAEE) the chain is on the cytoplasmic side. The helical; Signal-anchor for type II membrane protein transmembrane segment at 45 to 65 (AYCVSMSCVTAAASVLSLMDA) threads the bilayer. The Peptidase M13 domain maps to 46-727 (YCVSMSCVTA…MNPVHKCEVW (682 aa)). Intrachain disulfides connect Cys-47–Cys-52, Cys-70–Cys-712, Cys-78–Cys-672, Cys-134–Cys-392, and Cys-601–Cys-724. Residues 66–727 (TADPCSDFYQ…MNPVHKCEVW (662 aa)) are Extracellular-facing. N-linked (GlcNAc...) asparagine glycans are attached at residues Asn-138, Asn-160, Asn-164, Asn-169, Asn-222, Asn-309, Asn-337, Asn-340, and Asn-511. His-564 provides a ligand contact to Zn(2+). Glu-565 is an active-site residue. Residue His-568 participates in Zn(2+) binding. Residues Asn-589 and Asn-608 are each glycosylated (N-linked (GlcNAc...) asparagine). Glu-624 is a Zn(2+) binding site. Asp-628 (proton donor) is an active-site residue. Asn-656 carries an N-linked (GlcNAc...) asparagine glycan.

This sequence belongs to the peptidase M13 family. Zn(2+) serves as cofactor. Highly expressed in brain and midgut, and to a lesser extent in fat body, ovaries, testes and haemocytes.

Its subcellular location is the cell membrane. The protein is Endothelin-converting enzyme homolog of Locusta migratoria (Migratory locust).